We begin with the raw amino-acid sequence, 128 residues long: Large-conductance mechanosensitive channel (128 aa).

Transmembrane regions (helical) follow at residues 10–30 (FAMRGNVVDMAIGVIIGSAFG) and 76–96 (GLFIQNVIDFIIIAFAIFMMI).

This sequence belongs to the MscL family. Homopentamer.

It localises to the cell inner membrane. Its function is as follows. Channel that opens in response to stretch forces in the membrane lipid bilayer. May participate in the regulation of osmotic pressure changes within the cell. This chain is Large-conductance mechanosensitive channel, found in Haemophilus influenzae (strain 86-028NP).